Here is a 239-residue protein sequence, read N- to C-terminus: tRNA (guanine-N(1)-)-methyltransferase (239 aa).

Residues G108 and 127–132 (LGDYVL) contribute to the S-adenosyl-L-methionine site.

Belongs to the RNA methyltransferase TrmD family. As to quaternary structure, homodimer.

The protein resides in the cytoplasm. The catalysed reaction is guanosine(37) in tRNA + S-adenosyl-L-methionine = N(1)-methylguanosine(37) in tRNA + S-adenosyl-L-homocysteine + H(+). Its function is as follows. Specifically methylates guanosine-37 in various tRNAs. This Streptococcus pneumoniae serotype 2 (strain D39 / NCTC 7466) protein is tRNA (guanine-N(1)-)-methyltransferase.